The primary structure comprises 253 residues: Ice-binding protein (253 aa).

The first 27 residues, 1–27 (MKTLISNSKKVLIPLIMGSIFAGNVMA), serve as a signal peptide directing secretion. Residues Cys-75 and Cys-93 are joined by a disulfide bond. 2 consecutive short sequence motifs (ice-binding site motif (T-A/G-X-T/N)) follow at residues 220 to 223 (TGTT) and 232 to 235 (TAVT).

Belongs to the ice-binding protein family.

Its subcellular location is the secreted. Its function is as follows. Binds to the surface of ice crystals and inhibits their growth. Has ice recrystallization inhibition (RI) activity (the ability to prevent the formation of larger grains of ice at the expense of smaller grains), which may protect membranes from freezing injury. Has high thermal hysteresis (TH) activity, which is the ability to lower the freezing point of an aqueous solution below its melting point, and thus the freezing of the cell fluid can be prevented protecting the organism from ice damage. The TH activity of this protein is 3.8 degrees Celsius at 14 mM. The sequence is that of Ice-binding protein from Colwellia sp.